We begin with the raw amino-acid sequence, 327 residues long: Ribose-phosphate pyrophosphokinase (327 aa).

Residues 40 to 42 and 99 to 100 each bind ATP; these read DGE and RQ. Histidine 134 and aspartate 173 together coordinate Mg(2+). Residue lysine 196 is part of the active site. D-ribose 5-phosphate contacts are provided by residues arginine 198, aspartate 222, and 226–230; that span reads DTANT.

The protein belongs to the ribose-phosphate pyrophosphokinase family. Class I subfamily. As to quaternary structure, homohexamer. Mg(2+) is required as a cofactor.

The protein resides in the cytoplasm. The catalysed reaction is D-ribose 5-phosphate + ATP = 5-phospho-alpha-D-ribose 1-diphosphate + AMP + H(+). Its pathway is metabolic intermediate biosynthesis; 5-phospho-alpha-D-ribose 1-diphosphate biosynthesis; 5-phospho-alpha-D-ribose 1-diphosphate from D-ribose 5-phosphate (route I): step 1/1. Functionally, involved in the biosynthesis of the central metabolite phospho-alpha-D-ribosyl-1-pyrophosphate (PRPP) via the transfer of pyrophosphoryl group from ATP to 1-hydroxyl of ribose-5-phosphate (Rib-5-P). This chain is Ribose-phosphate pyrophosphokinase, found in Chromobacterium violaceum (strain ATCC 12472 / DSM 30191 / JCM 1249 / CCUG 213 / NBRC 12614 / NCIMB 9131 / NCTC 9757 / MK).